Here is a 434-residue protein sequence, read N- to C-terminus: UDP-N-acetylglucosamine 1-carboxyvinyltransferase (434 aa).

Residue 22–23 coordinates phosphoenolpyruvate; sequence KN. Arg97 contributes to the UDP-N-acetyl-alpha-D-glucosamine binding site. Asp121 acts as the Proton donor in catalysis. UDP-N-acetyl-alpha-D-glucosamine is bound by residues Asp319 and Met341.

The protein belongs to the EPSP synthase family. MurA subfamily.

It is found in the cytoplasm. It carries out the reaction phosphoenolpyruvate + UDP-N-acetyl-alpha-D-glucosamine = UDP-N-acetyl-3-O-(1-carboxyvinyl)-alpha-D-glucosamine + phosphate. Its pathway is cell wall biogenesis; peptidoglycan biosynthesis. In terms of biological role, cell wall formation. Adds enolpyruvyl to UDP-N-acetylglucosamine. The chain is UDP-N-acetylglucosamine 1-carboxyvinyltransferase from Bacteroides thetaiotaomicron (strain ATCC 29148 / DSM 2079 / JCM 5827 / CCUG 10774 / NCTC 10582 / VPI-5482 / E50).